The primary structure comprises 66 residues: Large ribosomal subunit protein bL33c (66 aa).

The protein belongs to the bacterial ribosomal protein bL33 family.

Its subcellular location is the plastid. The protein localises to the chloroplast. The sequence is that of Large ribosomal subunit protein bL33c from Liriodendron tulipifera (Tuliptree).